Reading from the N-terminus, the 126-residue chain is Small ribosomal subunit protein uS12 (126 aa).

The interval 1–23 (MPTISQLVRKGRKTVASKSTAPA) is disordered. D89 carries the 3-methylthioaspartic acid modification.

Belongs to the universal ribosomal protein uS12 family. As to quaternary structure, part of the 30S ribosomal subunit. Contacts proteins S8 and S17. May interact with IF1 in the 30S initiation complex.

Its function is as follows. With S4 and S5 plays an important role in translational accuracy. In terms of biological role, interacts with and stabilizes bases of the 16S rRNA that are involved in tRNA selection in the A site and with the mRNA backbone. Located at the interface of the 30S and 50S subunits, it traverses the body of the 30S subunit contacting proteins on the other side and probably holding the rRNA structure together. The combined cluster of proteins S8, S12 and S17 appears to hold together the shoulder and platform of the 30S subunit. The protein is Small ribosomal subunit protein uS12 of Clostridium perfringens (strain ATCC 13124 / DSM 756 / JCM 1290 / NCIMB 6125 / NCTC 8237 / Type A).